The sequence spans 85 residues: Putative membrane protein insertion efficiency factor (85 aa).

It belongs to the UPF0161 family.

The protein resides in the cell inner membrane. Its function is as follows. Could be involved in insertion of integral membrane proteins into the membrane. The sequence is that of Putative membrane protein insertion efficiency factor from Sodalis glossinidius (strain morsitans).